Consider the following 333-residue polypeptide: MPATRTPIHPEAAAYKNPRYQSGPLSVIPKSFVPYCELMRLELPHGNFLGYFPHLVGLLYGSSASPARLPANEVAFQAVLYIGWTFFMRGAGCAWNDVVDQDFDRKTTRCRVRPVARGAVSTTSANIFGFAMVALAFACISPLPAECQRLGLMTTVLSIIYPFCKRVTNFAQVILGMTLAINFILAAYGAGLPAIEAPYTVPTICVTTAITLLVVFYDVVYARQDTADDLKSGVKGMAVLFRNYVEILLTSITLVIAGLIATTGVLVDNGPYFFVFSVAGLLAALLAMIGGIRYRIFHTWNSYSGWFYALAIFNLLGGYLIEYLDQVPMLNKA.

8 helical membrane-spanning segments follow: residues 74–94, 125–145, 147–164, 173–193, 201–221, 247–267, 272–292, and 304–324; these read VAFQ…AGCA, ANIF…PLPA, CQRL…YPFC, VILG…AGLP, VPTI…DVVY, ILLT…GVLV, YFFV…IGGI, and SGWF…IEYL.

It belongs to the UbiA prenyltransferase family.

It is found in the membrane. It carries out the reaction orsellinate + (2E,6E)-farnesyl diphosphate = ilicicolinate B + diphosphate. It participates in secondary metabolite biosynthesis; terpenoid biosynthesis. Functionally, prenyltransferase; part of the cluster that mediates the biosynthesis of LL-Z1272-beta, also known as ilicicolin B, a prenylated aryl-aldehyde produced by several fungi and that serves as a key pathway intermediate for many fungal meroterpenoids. The first step in the pathway is performed by the non-reducing polyketide synthase stbA that produces orsellinic acid by condensing acetyl-CoA with 3 malonyl-CoA units. The prenyltransferase stbC then prenylates orsenilic acid into grifolic acid. Finally, grifolic acid is reduced to ilicicolin B by the NRPS-like protein stbB. This is Prenyltransferase stbC from Stachybotrys bisbyi (Hyalostachybotrys bisbyi).